We begin with the raw amino-acid sequence, 479 residues long: tRNA modification GTPase MnmE (479 aa).

(6S)-5-formyl-5,6,7,8-tetrahydrofolate is bound by residues Arg-30, Glu-91, and Lys-130. Residues 226–402 (GFRIVLTGLP…VLKDLVKEFA (177 aa)) enclose the TrmE-type G domain. Position 236 (Asn-236) interacts with K(+). Residues 236-241 (NVGKSS), 255-261 (TDIPGTT), and 280-283 (DTAG) contribute to the GTP site. Ser-240 contributes to the Mg(2+) binding site. K(+) contacts are provided by Thr-255, Ile-257, and Thr-260. Thr-261 is a binding site for Mg(2+). Lys-479 contacts (6S)-5-formyl-5,6,7,8-tetrahydrofolate.

It belongs to the TRAFAC class TrmE-Era-EngA-EngB-Septin-like GTPase superfamily. TrmE GTPase family. As to quaternary structure, homodimer. Heterotetramer of two MnmE and two MnmG subunits. Requires K(+) as cofactor.

Its subcellular location is the cytoplasm. Its function is as follows. Exhibits a very high intrinsic GTPase hydrolysis rate. Involved in the addition of a carboxymethylaminomethyl (cmnm) group at the wobble position (U34) of certain tRNAs, forming tRNA-cmnm(5)s(2)U34. The chain is tRNA modification GTPase MnmE from Bdellovibrio bacteriovorus (strain ATCC 15356 / DSM 50701 / NCIMB 9529 / HD100).